A 192-amino-acid polypeptide reads, in one-letter code: UPF0312 protein PC1_2518 (192 aa).

The signal sequence occupies residues 1 to 23 (MLKKTLLSLTAVSMLASAGSALA).

Belongs to the UPF0312 family. Type 1 subfamily.

The protein localises to the periplasm. This Pectobacterium carotovorum subsp. carotovorum (strain PC1) protein is UPF0312 protein PC1_2518.